The sequence spans 89 residues: Protein M7 (89 aa).

A signal peptide spans 1-25; it reads MAAMKSLATAILVVLLLRRLPRGLS. Intrachain disulfides connect C28–C65, C38–C54, C55–C80, and C67–C87.

It belongs to the A9/FIL1 family. Tapetum of anthers.

It is found in the secreted. The sequence is that of Protein M7 (M7) from Lilium henryi (Henry's lily).